The chain runs to 164 residues: SsrA-binding protein (164 aa).

A disordered region spans residues 141–164 (KLHDKRQDEKQKSIKKEINSALKR). Residues 145–158 (KRQDEKQKSIKKEI) are compositionally biased toward basic and acidic residues.

The protein belongs to the SmpB family.

It localises to the cytoplasm. Functionally, required for rescue of stalled ribosomes mediated by trans-translation. Binds to transfer-messenger RNA (tmRNA), required for stable association of tmRNA with ribosomes. tmRNA and SmpB together mimic tRNA shape, replacing the anticodon stem-loop with SmpB. tmRNA is encoded by the ssrA gene; the 2 termini fold to resemble tRNA(Ala) and it encodes a 'tag peptide', a short internal open reading frame. During trans-translation Ala-aminoacylated tmRNA acts like a tRNA, entering the A-site of stalled ribosomes, displacing the stalled mRNA. The ribosome then switches to translate the ORF on the tmRNA; the nascent peptide is terminated with the 'tag peptide' encoded by the tmRNA and targeted for degradation. The ribosome is freed to recommence translation, which seems to be the essential function of trans-translation. The chain is SsrA-binding protein from Prochlorococcus marinus (strain MIT 9301).